Reading from the N-terminus, the 183-residue chain is Adenine phosphoribosyltransferase (183 aa).

It belongs to the purine/pyrimidine phosphoribosyltransferase family. Homodimer.

The protein resides in the cytoplasm. It catalyses the reaction AMP + diphosphate = 5-phospho-alpha-D-ribose 1-diphosphate + adenine. Its pathway is purine metabolism; AMP biosynthesis via salvage pathway; AMP from adenine: step 1/1. In terms of biological role, catalyzes a salvage reaction resulting in the formation of AMP, that is energically less costly than de novo synthesis. This chain is Adenine phosphoribosyltransferase, found in Klebsiella pneumoniae subsp. pneumoniae (strain ATCC 700721 / MGH 78578).